Here is a 162-residue protein sequence, read N- to C-terminus: Large ribosomal subunit protein uL30 (162 aa).

Belongs to the universal ribosomal protein uL30 family. As to quaternary structure, part of the 50S ribosomal subunit.

The chain is Large ribosomal subunit protein uL30 from Korarchaeum cryptofilum (strain OPF8).